Reading from the N-terminus, the 373-residue chain is 4-hydroxy-3-methylbut-2-en-1-yl diphosphate synthase (flavodoxin) (373 aa).

Residues C270, C273, C305, and E312 each coordinate [4Fe-4S] cluster.

This sequence belongs to the IspG family. The cofactor is [4Fe-4S] cluster.

The catalysed reaction is (2E)-4-hydroxy-3-methylbut-2-enyl diphosphate + oxidized [flavodoxin] + H2O + 2 H(+) = 2-C-methyl-D-erythritol 2,4-cyclic diphosphate + reduced [flavodoxin]. It participates in isoprenoid biosynthesis; isopentenyl diphosphate biosynthesis via DXP pathway; isopentenyl diphosphate from 1-deoxy-D-xylulose 5-phosphate: step 5/6. Functionally, converts 2C-methyl-D-erythritol 2,4-cyclodiphosphate (ME-2,4cPP) into 1-hydroxy-2-methyl-2-(E)-butenyl 4-diphosphate. This Serratia proteamaculans (strain 568) protein is 4-hydroxy-3-methylbut-2-en-1-yl diphosphate synthase (flavodoxin).